A 79-amino-acid chain; its full sequence is Acyl carrier protein 2 (79 aa).

In terms of domain architecture, Carrier spans aspartate 2 to valine 77. Position 37 is an O-(pantetheine 4'-phosphoryl)serine (serine 37).

It belongs to the acyl carrier protein (ACP) family. In terms of processing, 4'-phosphopantetheine is transferred from CoA to a specific serine of apo-ACP by AcpS. This modification is essential for activity because fatty acids are bound in thioester linkage to the sulfhydryl of the prosthetic group.

It is found in the cytoplasm. The protein operates within lipid metabolism; fatty acid biosynthesis. In terms of biological role, carrier of the growing fatty acid chain in fatty acid biosynthesis. This is Acyl carrier protein 2 from Pseudomonas aeruginosa (strain ATCC 15692 / DSM 22644 / CIP 104116 / JCM 14847 / LMG 12228 / 1C / PRS 101 / PAO1).